We begin with the raw amino-acid sequence, 265 residues long: Phosphate import ATP-binding protein PstB 1 (265 aa).

Residues 20–260 (LSTNDLSVLY…PKGKITEDYI (241 aa)) enclose the ABC transporter domain. ATP is bound at residue 53-60 (GASGSGKS).

It belongs to the ABC transporter superfamily. Phosphate importer (TC 3.A.1.7) family. As to quaternary structure, the complex is composed of two ATP-binding proteins (PstB), two transmembrane proteins (PstC and PstA) and a solute-binding protein (PstS).

Its subcellular location is the cell membrane. The enzyme catalyses phosphate(out) + ATP + H2O = ADP + 2 phosphate(in) + H(+). Part of the ABC transporter complex PstSACB involved in phosphate import. Responsible for energy coupling to the transport system. This chain is Phosphate import ATP-binding protein PstB 1, found in Lactobacillus acidophilus (strain ATCC 700396 / NCK56 / N2 / NCFM).